We begin with the raw amino-acid sequence, 458 residues long: Exodeoxyribonuclease 7 large subunit (458 aa).

The protein belongs to the XseA family. Heterooligomer composed of large and small subunits.

The protein resides in the cytoplasm. The catalysed reaction is Exonucleolytic cleavage in either 5'- to 3'- or 3'- to 5'-direction to yield nucleoside 5'-phosphates.. Its function is as follows. Bidirectionally degrades single-stranded DNA into large acid-insoluble oligonucleotides, which are then degraded further into small acid-soluble oligonucleotides. This is Exodeoxyribonuclease 7 large subunit from Yersinia pseudotuberculosis serotype O:1b (strain IP 31758).